The primary structure comprises 33 residues: Glucagon-2 (33 aa).

Belongs to the glucagon family.

The protein resides in the secreted. Its function is as follows. Promotes hydrolysis of glycogen and lipids, and raises the blood sugar level. In Oreochromis niloticus (Nile tilapia), this protein is Glucagon-2 (gcg2).